The primary structure comprises 223 residues: Small ribosomal subunit protein uS3 (223 aa).

One can recognise a KH type-2 domain in the interval 38–106 (LKAELKEKLK…EVYIDIQEVH (69 aa)).

It belongs to the universal ribosomal protein uS3 family. In terms of assembly, part of the 30S ribosomal subunit. Forms a tight complex with proteins S10 and S14.

In terms of biological role, binds the lower part of the 30S subunit head. Binds mRNA in the 70S ribosome, positioning it for translation. This Koribacter versatilis (strain Ellin345) protein is Small ribosomal subunit protein uS3.